Here is a 1969-residue protein sequence, read N- to C-terminus: Myosin-3 (1969 aa).

The Myosin N-terminal SH3-like domain maps to 33–82; that stretch reads DSKKNCWIPDPEDGFVAAEIQSTTGDQVTVVTVKGNQITVKKDQCQEMNP. The 706-residue stretch at 86-791 folds into the Myosin motor domain; the sequence is DKTEDMANLT…VLAKLEDLRD (706 aa). Lys130 bears the N6,N6,N6-trimethyllysine mark. Residue 179–186 participates in ATP binding; it reads GESGAGKT. Actin-binding regions lie at residues 667-689 and 770-784; these read LNNL…IPNE and KIGE…GVLA. In terms of domain architecture, IQ spans 794–823; sequence LSRIVTMFQSRIRSYLAKAEVRRRYEQQTG. A coiled-coil region spans residues 853 to 1941; it reads LKAGKEQEAM…KMRNKIRASA (1089 aa). 3 disordered regions span residues 943 to 967, 993 to 1029, and 1134 to 1153; these read QERH…KKHV, DEMA…EEDK, and ELES…NELQ. 2 stretches are compositionally biased toward basic and acidic residues: residues 1001-1029 and 1137-1153; these read SVAK…EEDK and SERN…NELQ.

It belongs to the TRAFAC class myosin-kinesin ATPase superfamily. Myosin family. In terms of assembly, muscle myosin is a hexameric protein that consists of 2 heavy chain subunits (MHC), 2 alkali light chain subunits (MLC) and 2 regulatory light chain subunits (MLC-2).

The protein localises to the cytoplasm. It is found in the myofibril. It localises to the sarcomere. Its subcellular location is the a band. In terms of biological role, essential for muscle contraction. Involved in ovulation likely by regulating the contraction of gonadal myoepithelial sheath cells. The protein is Myosin-3 of Caenorhabditis briggsae.